Consider the following 311-residue polypeptide: Acetyl-coenzyme A carboxylase carboxyl transferase subunit alpha (311 aa).

A CoA carboxyltransferase C-terminal domain is found at 36–286 (NLDKEVSKIF…GEYFLSELKK (251 aa)).

The protein belongs to the AccA family. Acetyl-CoA carboxylase is a heterohexamer composed of biotin carboxyl carrier protein (AccB), biotin carboxylase (AccC) and two subunits each of ACCase subunit alpha (AccA) and ACCase subunit beta (AccD).

The protein localises to the cytoplasm. The enzyme catalyses N(6)-carboxybiotinyl-L-lysyl-[protein] + acetyl-CoA = N(6)-biotinyl-L-lysyl-[protein] + malonyl-CoA. Its pathway is lipid metabolism; malonyl-CoA biosynthesis; malonyl-CoA from acetyl-CoA: step 1/1. Functionally, component of the acetyl coenzyme A carboxylase (ACC) complex. First, biotin carboxylase catalyzes the carboxylation of biotin on its carrier protein (BCCP) and then the CO(2) group is transferred by the carboxyltransferase to acetyl-CoA to form malonyl-CoA. The protein is Acetyl-coenzyme A carboxylase carboxyl transferase subunit alpha of Sulfurimonas denitrificans (strain ATCC 33889 / DSM 1251) (Thiomicrospira denitrificans (strain ATCC 33889 / DSM 1251)).